A 611-amino-acid polypeptide reads, in one-letter code: Leukotriene A-4 hydrolase (611 aa).

The residue at position 73 (Lys-73) is an N6-acetyllysine. Residues 135-137 and 267-272 contribute to the a peptide site; these read QCQ and PYGGME. His-296 serves as a coordination point for Zn(2+). Catalysis depends on Glu-297, which acts as the Proton acceptor. His-300 and Glu-319 together coordinate Zn(2+). Position 337 is an N6-acetyllysine (Lys-337). Catalysis depends on Tyr-384, which acts as the Proton donor. Position 414 is an N6-acetyllysine (Lys-414). Ser-416 carries the post-translational modification Phosphoserine. 564-566 provides a ligand contact to a peptide; the sequence is RMK. The residue at position 573 (Lys-573) is an N6-acetyllysine.

It belongs to the peptidase M1 family. In terms of assembly, monomer. It depends on Zn(2+) as a cofactor. In terms of processing, phosphorylation at Ser-416 inhibits leukotriene-A4 hydrolase activity.

The protein localises to the cytoplasm. The catalysed reaction is leukotriene A4 + H2O = leukotriene B4. It carries out the reaction (5S,6S)-epoxy-(18R)-hydroxy-(7E,9E,11Z,14Z,16E)-eicosapentaenoate + H2O = resolvin E1. The enzyme catalyses (5S,6S)-epoxy-(18S)-hydroxy-(7E,9E,11Z,14Z,16E)-eicosapentaenoate + H2O = 18S-resolvin E1. It catalyses the reaction Release of the N-terminal residue from a tripeptide.. It participates in lipid metabolism; leukotriene B4 biosynthesis. With respect to regulation, inhibited by bestatin. The epoxide hydrolase activity is restrained by suicide inactivation that involves binding of LTA4 to Tyr-379. 4-(4-benzylphenyl)thiazol-2-amine (ARM1) selectively inhibits the epoxide hydrolase activity. Bifunctional zinc metalloenzyme that comprises both epoxide hydrolase (EH) and aminopeptidase activities. Acts as an epoxide hydrolase to catalyze the conversion of LTA4 to the pro-inflammatory mediator leukotriene B4 (LTB4). Also has aminopeptidase activity, with high affinity for N-terminal arginines of various synthetic tripeptides. In addition to its pro-inflammatory EH activity, may also counteract inflammation by its aminopeptidase activity, which inactivates by cleavage another neutrophil attractant, the tripeptide Pro-Gly-Pro (PGP), a bioactive fragment of collagen generated by the action of matrix metalloproteinase-9 (MMP9) and prolylendopeptidase (PREPL). Involved also in the biosynthesis of resolvin E1 and 18S-resolvin E1 from eicosapentaenoic acid, two lipid mediators that show potent anti-inflammatory and pro-resolving actions. This is Leukotriene A-4 hydrolase (Lta4h) from Mus musculus (Mouse).